The primary structure comprises 95 residues: MVTDAQQARLTAWVHGRVQGVGFRWWTRARALELGLAGSATNLPGNRVEVVAEGPRESCERLLEALRSPDTPGDVDHVAEQWSEPKGGLTGFVER.

The 87-residue stretch at 9 to 95 (RLTAWVHGRV…KGGLTGFVER (87 aa)) folds into the Acylphosphatase-like domain. Residues Arg24 and Asn42 contribute to the active site.

Belongs to the acylphosphatase family.

The enzyme catalyses an acyl phosphate + H2O = a carboxylate + phosphate + H(+). The polypeptide is Acylphosphatase (acyP) (Saccharopolyspora erythraea (strain ATCC 11635 / DSM 40517 / JCM 4748 / NBRC 13426 / NCIMB 8594 / NRRL 2338)).